The sequence spans 284 residues: 2-dehydro-3-deoxyphosphooctonate aldolase (284 aa).

It belongs to the KdsA family.

The protein resides in the cytoplasm. It catalyses the reaction D-arabinose 5-phosphate + phosphoenolpyruvate + H2O = 3-deoxy-alpha-D-manno-2-octulosonate-8-phosphate + phosphate. It participates in carbohydrate biosynthesis; 3-deoxy-D-manno-octulosonate biosynthesis; 3-deoxy-D-manno-octulosonate from D-ribulose 5-phosphate: step 2/3. Its pathway is bacterial outer membrane biogenesis; lipopolysaccharide biosynthesis. This Escherichia fergusonii (strain ATCC 35469 / DSM 13698 / CCUG 18766 / IAM 14443 / JCM 21226 / LMG 7866 / NBRC 102419 / NCTC 12128 / CDC 0568-73) protein is 2-dehydro-3-deoxyphosphooctonate aldolase.